Consider the following 359-residue polypeptide: Phosphoserine aminotransferase (359 aa).

Arg41 serves as a coordination point for L-glutamate. The pyridoxal 5'-phosphate site is built by Trp101, Thr151, Asp170, and Gln193. Lys194 bears the N6-(pyridoxal phosphate)lysine mark. 235–236 provides a ligand contact to pyridoxal 5'-phosphate; it reads NT.

Belongs to the class-V pyridoxal-phosphate-dependent aminotransferase family. SerC subfamily. Homodimer. Pyridoxal 5'-phosphate serves as cofactor.

Its subcellular location is the cytoplasm. It carries out the reaction O-phospho-L-serine + 2-oxoglutarate = 3-phosphooxypyruvate + L-glutamate. The enzyme catalyses 4-(phosphooxy)-L-threonine + 2-oxoglutarate = (R)-3-hydroxy-2-oxo-4-phosphooxybutanoate + L-glutamate. Its pathway is amino-acid biosynthesis; L-serine biosynthesis; L-serine from 3-phospho-D-glycerate: step 2/3. It functions in the pathway cofactor biosynthesis; pyridoxine 5'-phosphate biosynthesis; pyridoxine 5'-phosphate from D-erythrose 4-phosphate: step 3/5. In terms of biological role, catalyzes the reversible conversion of 3-phosphohydroxypyruvate to phosphoserine and of 3-hydroxy-2-oxo-4-phosphonooxybutanoate to phosphohydroxythreonine. The protein is Phosphoserine aminotransferase of Laribacter hongkongensis (strain HLHK9).